Reading from the N-terminus, the 428-residue chain is Aerobic C4-dicarboxylate transport protein (428 aa).

Transmembrane regions (helical) follow at residues 5 to 27 (LFKS…GHYY), 47 to 64 (MIIA…IAGM), 77 to 99 (ALLY…VNVV), 141 to 163 (VIGA…FGFA), 184 to 206 (VIFG…AMAF), 216 to 238 (LVQL…VVVL), 289 to 311 (VVGL…YLTM), 326 to 348 (IFHQ…GVTG), and 353 to 375 (VLAA…ILGI).

The protein belongs to the dicarboxylate/amino acid:cation symporter (DAACS) (TC 2.A.23) family.

The protein resides in the cell inner membrane. Its function is as follows. Responsible for the transport of dicarboxylates such as succinate, fumarate, and malate from the periplasm across the inner membrane. This Salmonella typhimurium (strain LT2 / SGSC1412 / ATCC 700720) protein is Aerobic C4-dicarboxylate transport protein (dctA).